We begin with the raw amino-acid sequence, 326 residues long: Ornithine carbamoyltransferase (326 aa).

Carbamoyl phosphate is bound by residues 54–57 (STRT), Gln81, Arg105, and 132–135 (HPTQ). L-ornithine contacts are provided by residues Asn164, Asp225, and 229 to 230 (SM). Carbamoyl phosphate contacts are provided by residues 266–267 (CL) and Arg311.

This sequence belongs to the aspartate/ornithine carbamoyltransferase superfamily. OTCase family.

The protein resides in the cytoplasm. It catalyses the reaction carbamoyl phosphate + L-ornithine = L-citrulline + phosphate + H(+). Its pathway is amino-acid biosynthesis; L-arginine biosynthesis; L-arginine from L-ornithine and carbamoyl phosphate: step 1/3. In terms of biological role, reversibly catalyzes the transfer of the carbamoyl group from carbamoyl phosphate (CP) to the N(epsilon) atom of ornithine (ORN) to produce L-citrulline. This chain is Ornithine carbamoyltransferase (argF), found in Streptococcus mutans serotype c (strain ATCC 700610 / UA159).